We begin with the raw amino-acid sequence, 311 residues long: GTP cyclohydrolase FolE2 (311 aa).

The protein belongs to the GTP cyclohydrolase IV family.

The enzyme catalyses GTP + H2O = 7,8-dihydroneopterin 3'-triphosphate + formate + H(+). Its pathway is cofactor biosynthesis; 7,8-dihydroneopterin triphosphate biosynthesis; 7,8-dihydroneopterin triphosphate from GTP: step 1/1. Its function is as follows. Converts GTP to 7,8-dihydroneopterin triphosphate. The polypeptide is GTP cyclohydrolase FolE2 (Xanthomonas campestris pv. campestris (strain 8004)).